The primary structure comprises 138 residues: ATP synthase epsilon chain (138 aa).

The protein belongs to the ATPase epsilon chain family. In terms of assembly, F-type ATPases have 2 components, CF(1) - the catalytic core - and CF(0) - the membrane proton channel. CF(1) has five subunits: alpha(3), beta(3), gamma(1), delta(1), epsilon(1). CF(0) has three main subunits: a, b and c.

It localises to the cell inner membrane. In terms of biological role, produces ATP from ADP in the presence of a proton gradient across the membrane. The sequence is that of ATP synthase epsilon chain from Bartonella quintana (strain Toulouse) (Rochalimaea quintana).